A 201-amino-acid chain; its full sequence is dITP/XTP pyrophosphatase (201 aa).

7-12 is a substrate binding site; it reads SNNAHK. The active-site Proton acceptor is the Asp72. Mg(2+) is bound at residue Asp72. Residues Ser73, 154-157, Lys177, and 182-183 contribute to the substrate site; these read FGYD and HR.

It belongs to the HAM1 NTPase family. In terms of assembly, homodimer. Requires Mg(2+) as cofactor.

It carries out the reaction XTP + H2O = XMP + diphosphate + H(+). The catalysed reaction is dITP + H2O = dIMP + diphosphate + H(+). The enzyme catalyses ITP + H2O = IMP + diphosphate + H(+). Functionally, pyrophosphatase that catalyzes the hydrolysis of nucleoside triphosphates to their monophosphate derivatives, with a high preference for the non-canonical purine nucleotides XTP (xanthosine triphosphate), dITP (deoxyinosine triphosphate) and ITP. Seems to function as a house-cleaning enzyme that removes non-canonical purine nucleotides from the nucleotide pool, thus preventing their incorporation into DNA/RNA and avoiding chromosomal lesions. The chain is dITP/XTP pyrophosphatase from Leuconostoc mesenteroides subsp. mesenteroides (strain ATCC 8293 / DSM 20343 / BCRC 11652 / CCM 1803 / JCM 6124 / NCDO 523 / NBRC 100496 / NCIMB 8023 / NCTC 12954 / NRRL B-1118 / 37Y).